A 677-amino-acid chain; its full sequence is DNA ligase (677 aa).

NAD(+) is bound by residues 38–42 (DYDFD), 87–88 (SL), and Glu-121. The active-site N6-AMP-lysine intermediate is Lys-123. Arg-144, Glu-187, Lys-300, and Lys-324 together coordinate NAD(+). Residues Cys-418, Cys-421, Cys-436, and Cys-442 each coordinate Zn(2+). A BRCT domain is found at 601 to 677 (LINSNFEGLS…ISEEEFEAML (77 aa)).

Belongs to the NAD-dependent DNA ligase family. LigA subfamily. It depends on Mg(2+) as a cofactor. Mn(2+) serves as cofactor.

It catalyses the reaction NAD(+) + (deoxyribonucleotide)n-3'-hydroxyl + 5'-phospho-(deoxyribonucleotide)m = (deoxyribonucleotide)n+m + AMP + beta-nicotinamide D-nucleotide.. Its function is as follows. DNA ligase that catalyzes the formation of phosphodiester linkages between 5'-phosphoryl and 3'-hydroxyl groups in double-stranded DNA using NAD as a coenzyme and as the energy source for the reaction. It is essential for DNA replication and repair of damaged DNA. The polypeptide is DNA ligase (Chlorobium luteolum (strain DSM 273 / BCRC 81028 / 2530) (Pelodictyon luteolum)).